Here is a 264-residue protein sequence, read N- to C-terminus: Catechol O-methyltransferase B (264 aa).

Residues 1–29 form the signal peptide; sequence MLGVLLCWCLGASVLLYVLYSWLIPAAVQ. An N-linked (GlcNAc...) asparagine glycan is attached at Asn-31. Residues Val-92, Ser-122, Glu-140, and Asp-191 each contribute to the S-adenosyl-L-methionine site. Residue Asp-191 coordinates Mg(2+). Lys-194 contributes to the substrate binding site. Residues Asp-219 and Asn-220 each contribute to the Mg(2+) site. Substrate contacts are provided by Asn-220 and Glu-249.

It belongs to the class I-like SAM-binding methyltransferase superfamily. Cation-dependent O-methyltransferase family. The cofactor is Mg(2+). As to expression, strongly expressed in eye, diencephalon, spinal cord, hindbrain, liver, kidney and telencephalon. Also detected at very low levels in muscle, spleen, anterior gut and heart. In eye, expressed strongly in retina. In brain, expressed in the central part of the telencephalon, the periventricular gray zone of the optic tectum, the periglomerular nucleus, the olfactory bulb, and the region adjacent to the diencephalic ventricle in the hypothalamus. Expressed in gill, with strongest expression in gill filaments nearest the gill arch, and in esophageal epithelium.

It localises to the secreted. The catalysed reaction is a catechol + S-adenosyl-L-methionine = a guaiacol + S-adenosyl-L-homocysteine + H(+). Catalyzes the O-methylation, and thereby the inactivation, of catecholamine neurotransmitters and catechol hormones. The protein is Catechol O-methyltransferase B of Danio rerio (Zebrafish).